The chain runs to 379 residues: Flap endonuclease 1 (379 aa).

The tract at residues 1–105 (MGIKGLTKLL…QELAKRYSKR (105 aa)) is N-domain. Position 34 (aspartate 34) interacts with Mg(2+). DNA is bound at residue arginine 71. Residues aspartate 87, glutamate 159, glutamate 161, aspartate 180, and aspartate 182 each contribute to the Mg(2+) site. The tract at residues 123–254 (AIEKLSKRTV…QTALKLIRQH (132 aa)) is I-domain. Residue glutamate 159 participates in DNA binding. 2 residues coordinate DNA: glycine 232 and aspartate 234. Aspartate 234 contacts Mg(2+). The interval 331-379 (AKNKSSQGRLESFFKPTATTSAPLKRKETSDKTSKAAANKKTKAGGKKK) is disordered. An interaction with PCNA region spans residues 336-344 (SQGRLESFF). Over residues 355–364 (KRKETSDKTS) the composition is skewed to basic and acidic residues. Residues 368–379 (ANKKTKAGGKKK) are compositionally biased toward basic residues.

Belongs to the XPG/RAD2 endonuclease family. FEN1 subfamily. As to quaternary structure, interacts with PCNA. Three molecules of FEN1 bind to one PCNA trimer with each molecule binding to one PCNA monomer. PCNA stimulates the nuclease activity without altering cleavage specificity. Mg(2+) serves as cofactor. Post-translationally, phosphorylated. Phosphorylation upon DNA damage induces relocalization to the nuclear plasma.

It localises to the nucleus. The protein resides in the nucleolus. It is found in the nucleoplasm. Its subcellular location is the mitochondrion. Structure-specific nuclease with 5'-flap endonuclease and 5'-3' exonuclease activities involved in DNA replication and repair. During DNA replication, cleaves the 5'-overhanging flap structure that is generated by displacement synthesis when DNA polymerase encounters the 5'-end of a downstream Okazaki fragment. It enters the flap from the 5'-end and then tracks to cleave the flap base, leaving a nick for ligation. Also involved in the long patch base excision repair (LP-BER) pathway, by cleaving within the apurinic/apyrimidinic (AP) site-terminated flap. Acts as a genome stabilization factor that prevents flaps from equilibrating into structures that lead to duplications and deletions. Also possesses 5'-3' exonuclease activity on nicked or gapped double-stranded DNA, and exhibits RNase H activity. Also involved in replication and repair of rDNA and in repairing mitochondrial DNA. In Zea mays (Maize), this protein is Flap endonuclease 1.